Reading from the N-terminus, the 460-residue chain is Bifunctional protein GlmU (460 aa).

A pyrophosphorylase region spans residues 1-232 (MAISAALILA…PDEIMGVNDR (232 aa)). UDP-N-acetyl-alpha-D-glucosamine contacts are provided by residues 9–12 (LAAG), Lys-23, Gln-75, and 80–81 (GT). A Mg(2+)-binding site is contributed by Asp-105. UDP-N-acetyl-alpha-D-glucosamine is bound by residues Gly-142, Glu-157, Asn-172, and Asn-230. Asn-230 serves as a coordination point for Mg(2+). The interval 233-253 (VQLAHAARVLRQRVNLQLMLA) is linker. The tract at residues 254–460 (GVTLIDPDQT…GWCLKKRDNG (207 aa)) is N-acetyltransferase. Residues Arg-336 and Lys-354 each coordinate UDP-N-acetyl-alpha-D-glucosamine. Residue His-366 is the Proton acceptor of the active site. UDP-N-acetyl-alpha-D-glucosamine-binding residues include Tyr-369 and Asn-380. Acetyl-CoA-binding positions include 389–390 (NY), Ser-408, Ala-426, and Arg-443.

This sequence in the N-terminal section; belongs to the N-acetylglucosamine-1-phosphate uridyltransferase family. The protein in the C-terminal section; belongs to the transferase hexapeptide repeat family. Homotrimer. Requires Mg(2+) as cofactor.

It localises to the cytoplasm. It carries out the reaction alpha-D-glucosamine 1-phosphate + acetyl-CoA = N-acetyl-alpha-D-glucosamine 1-phosphate + CoA + H(+). It catalyses the reaction N-acetyl-alpha-D-glucosamine 1-phosphate + UTP + H(+) = UDP-N-acetyl-alpha-D-glucosamine + diphosphate. Its pathway is nucleotide-sugar biosynthesis; UDP-N-acetyl-alpha-D-glucosamine biosynthesis; N-acetyl-alpha-D-glucosamine 1-phosphate from alpha-D-glucosamine 6-phosphate (route II): step 2/2. The protein operates within nucleotide-sugar biosynthesis; UDP-N-acetyl-alpha-D-glucosamine biosynthesis; UDP-N-acetyl-alpha-D-glucosamine from N-acetyl-alpha-D-glucosamine 1-phosphate: step 1/1. It participates in bacterial outer membrane biogenesis; LPS lipid A biosynthesis. Functionally, catalyzes the last two sequential reactions in the de novo biosynthetic pathway for UDP-N-acetylglucosamine (UDP-GlcNAc). The C-terminal domain catalyzes the transfer of acetyl group from acetyl coenzyme A to glucosamine-1-phosphate (GlcN-1-P) to produce N-acetylglucosamine-1-phosphate (GlcNAc-1-P), which is converted into UDP-GlcNAc by the transfer of uridine 5-monophosphate (from uridine 5-triphosphate), a reaction catalyzed by the N-terminal domain. This is Bifunctional protein GlmU from Trichlorobacter lovleyi (strain ATCC BAA-1151 / DSM 17278 / SZ) (Geobacter lovleyi).